Consider the following 262-residue polypeptide: F-actin-capping protein subunit alpha (262 aa).

It belongs to the F-actin-capping protein alpha subunit family. In terms of assembly, heterodimer of an alpha and a beta subunit.

The protein localises to the cytoplasm. The protein resides in the cytoskeleton. In terms of biological role, F-actin-capping proteins bind in a Ca(2+)-independent manner to the fast growing ends of actin filaments (barbed end) thereby blocking the exchange of subunits at these ends. Unlike other capping proteins (such as gelsolin and severin), these proteins do not sever actin filaments. In Yarrowia lipolytica (strain CLIB 122 / E 150) (Yeast), this protein is F-actin-capping protein subunit alpha (CAP1).